The primary structure comprises 81 residues: Large ribosomal subunit protein eL31 (81 aa).

It belongs to the eukaryotic ribosomal protein eL31 family.

The polypeptide is Large ribosomal subunit protein eL31 (rpl31e) (Methanothermobacter thermautotrophicus (strain ATCC 29096 / DSM 1053 / JCM 10044 / NBRC 100330 / Delta H) (Methanobacterium thermoautotrophicum)).